The chain runs to 659 residues: MSLPPEKASELKQLIHQQLSKMDVHGRIREILAETIREELAPDQQHLSTEDLIKALRRRGIIDDVMKELNFVTDSVEQELPSSPKQPICFDRQSTLKKTNIDPTRRYLYLQVLGGKAFLEHLQEPEPLPGQVCSTFTLCLHYRNQRFRSKPVPCACEPDFHDGFLLEVHRESLGDGTRMADSTTMLSISDPIHMVLIKTDIFGETTLVASYFLEWRSVLGSENGVTSLTVELMGVGTESKVSVGILNIKLEMYPPLNQTLSQEVVNTQLALERQKTAEKERLFLVYAKQWWREYLQIRPSHNSRLVKIFAQDENGINRPVCSYVKPLRAGRLLDTPRQAARFVNVLGYERAPVIGGGGKQEQWCTLLAFLCRNKGDCEDHANLLCSLLLGYGLEAFVCVGTKAKGVPHAWVMTCGTDGAITFWESLTGHRYIHKPTNPDEPPVAEQPKPLYPYRTIGCVFNHQMFLGNCQPSDAVETCVFDLNDESKWKPMSEEAIKSVCAPGATTSLPPFPPLCASTIDASVTSNEIEMQLRLLVSEHRKDLGLTTVWEDQLSYLLSPALASYEFERTTSISAGNEEFQDAIRRAVPDGHTFKGFPIHFVYRNARRAFATCLRSPFCEEIICCRGDQVRLAVRVRVFTYPESACAVWIMFACKYRSVL.

A phosphoserine mark is found at S75 and S83.

Belongs to the CEP76 family. Interacts with CCP110 and CEP97.

Its subcellular location is the cytoplasm. It localises to the cytoskeleton. It is found in the microtubule organizing center. The protein resides in the centrosome. The protein localises to the centriole. Centrosomal protein involved in regulation of centriole duplication. Required to limit centriole duplication to once per cell cycle by preventing centriole reduplication. This chain is Centrosomal protein of 76 kDa (CEP76), found in Homo sapiens (Human).